We begin with the raw amino-acid sequence, 416 residues long: Glutamyl-tRNA reductase (416 aa).

Residues 50 to 53 (TCNR), S109, 114 to 116 (EPQ), and Q120 each bind substrate. The Nucleophile role is filled by C51. 189 to 194 (GAGEMI) is an NADP(+) binding site.

It belongs to the glutamyl-tRNA reductase family. As to quaternary structure, homodimer.

It catalyses the reaction (S)-4-amino-5-oxopentanoate + tRNA(Glu) + NADP(+) = L-glutamyl-tRNA(Glu) + NADPH + H(+). Its pathway is porphyrin-containing compound metabolism; protoporphyrin-IX biosynthesis; 5-aminolevulinate from L-glutamyl-tRNA(Glu): step 1/2. Catalyzes the NADPH-dependent reduction of glutamyl-tRNA(Glu) to glutamate 1-semialdehyde (GSA). The protein is Glutamyl-tRNA reductase of Ruthia magnifica subsp. Calyptogena magnifica.